The sequence spans 25 residues: LASP1 neighbor protein (25 aa).

The helical transmembrane segment at 4 to 24 threads the bilayer; the sequence is IFILMFFAIIGLVILSYIIYL.

Its subcellular location is the membrane. In terms of biological role, may play a key role in the skin fibroblasts (FBs)-keratinocyte-like cells (KLCs). The chain is LASP1 neighbor protein from Homo sapiens (Human).